A 338-amino-acid polypeptide reads, in one-letter code: Glyceraldehyde-3-phosphate dehydrogenase (338 aa).

Residues 12-13 (RI), Asp-34, and Arg-79 each bind NAD(+). D-glyceraldehyde 3-phosphate is bound by residues 150 to 152 (SCT), Thr-181, 210 to 211 (TG), and Arg-233. Residue Cys-151 is the Nucleophile of the active site. Asn-315 contacts NAD(+).

It belongs to the glyceraldehyde-3-phosphate dehydrogenase family. In terms of assembly, homotetramer.

Its subcellular location is the cytoplasm. The enzyme catalyses D-glyceraldehyde 3-phosphate + phosphate + NAD(+) = (2R)-3-phospho-glyceroyl phosphate + NADH + H(+). It participates in carbohydrate degradation; glycolysis; pyruvate from D-glyceraldehyde 3-phosphate: step 1/5. In Neurospora crassa (strain ATCC 24698 / 74-OR23-1A / CBS 708.71 / DSM 1257 / FGSC 987), this protein is Glyceraldehyde-3-phosphate dehydrogenase (gpd-1).